A 149-amino-acid polypeptide reads, in one-letter code: Probable flagellum biosynthesis repressor protein FlbT (149 aa).

The protein belongs to the FlbT family.

In terms of biological role, has a post-transcriptional repressor function in flagellum biogenesis. Associates with the 5'-UTR of fljK mRNA and promotes its degradation. This is Probable flagellum biosynthesis repressor protein FlbT from Allorhizobium ampelinum (strain ATCC BAA-846 / DSM 112012 / S4) (Agrobacterium vitis (strain S4)).